A 352-amino-acid chain; its full sequence is 4-hydroxy-3-methylbut-2-en-1-yl diphosphate synthase (flavodoxin) (352 aa).

[4Fe-4S] cluster-binding residues include Cys262, Cys265, Cys297, and Glu304.

It belongs to the IspG family. It depends on [4Fe-4S] cluster as a cofactor.

It carries out the reaction (2E)-4-hydroxy-3-methylbut-2-enyl diphosphate + oxidized [flavodoxin] + H2O + 2 H(+) = 2-C-methyl-D-erythritol 2,4-cyclic diphosphate + reduced [flavodoxin]. It participates in isoprenoid biosynthesis; isopentenyl diphosphate biosynthesis via DXP pathway; isopentenyl diphosphate from 1-deoxy-D-xylulose 5-phosphate: step 5/6. Functionally, converts 2C-methyl-D-erythritol 2,4-cyclodiphosphate (ME-2,4cPP) into 1-hydroxy-2-methyl-2-(E)-butenyl 4-diphosphate. This is 4-hydroxy-3-methylbut-2-en-1-yl diphosphate synthase (flavodoxin) from Campylobacter concisus (strain 13826).